The sequence spans 399 residues: Accessory Sec system protein translocase subunit SecY2 (399 aa).

Transmembrane regions (helical) follow at residues 14 to 34, 60 to 80, 102 to 122, 128 to 148, 152 to 172, 184 to 204, 238 to 258, 272 to 292, 335 to 355, and 362 to 382; these read ILFT…SIVG, LNVF…IMLL, IITI…YIHN, SNII…VWLA, ITYG…KSLF, VLLL…LLFI, ISIM…NLIA, FANP…SYLL, WTGA…TLLV, and IYFS…GETI.

The protein belongs to the SecY/SEC61-alpha family. SecY2 subfamily. Component of the accessory SecA2/SecY2 protein translocase complex required to export cell wall proteins. May form heterotrimers with SecE and SecG subunits.

It localises to the cell membrane. Part of the accessory SecA2/SecY2 system specifically required for export of possible cell wall proteins. The central subunit of a protein translocation channel. This chain is Accessory Sec system protein translocase subunit SecY2, found in Staphylococcus haemolyticus (strain JCSC1435).